The following is a 290-amino-acid chain: MKRTPHLLAIQSHVVFGHAGNSAAVFPMQRVGVNVWPLNTVQFSNHTQYGQWAGEVLAPHRIPELVEGIAAIGELGNCDAVLSGYLGSAAQGRAILSGIERIKAVNPKALYLCDPVMGHPEKGCSVPAEVSDFLLEEAAAVADFMCPNQLELDSFSGRKPQSLFDCLAMARALLARGPKAVLVKHLDYPGKPADGFEMLLVTAEGSWHLRRPLLAFPRQPVGVGDLTSGLFLARVLLGDNLVAAFEFTAAAVHEVLLETQACASYELQLVRAQDRIAHPRVKFEATPISL.

Substrate-binding positions include Ser12 and 47–48; that span reads TQ. ATP contacts are provided by residues Asp114, Glu151, Lys184, and 211 to 214; that span reads RPLL. Asp225 lines the substrate pocket.

The protein belongs to the pyridoxine kinase family. PdxY subfamily. In terms of assembly, homodimer. Requires Mg(2+) as cofactor.

The enzyme catalyses pyridoxal + ATP = pyridoxal 5'-phosphate + ADP + H(+). Its pathway is cofactor metabolism; pyridoxal 5'-phosphate salvage; pyridoxal 5'-phosphate from pyridoxal: step 1/1. Pyridoxal kinase involved in the salvage pathway of pyridoxal 5'-phosphate (PLP). Catalyzes the phosphorylation of pyridoxal to PLP. In Pseudomonas fluorescens (strain Pf0-1), this protein is Pyridoxal kinase PdxY.